The following is a 492-amino-acid chain: Ethanolamine-phosphate phospho-lyase (492 aa).

Lysine 280 is modified (N6-(pyridoxal phosphate)lysine). The interval 462-492 (ASDENGLVHPSNGNSHKHTSTIPLSKKTKRN) is disordered.

Belongs to the class-III pyridoxal-phosphate-dependent aminotransferase family. In terms of assembly, homotetramer. It depends on pyridoxal 5'-phosphate as a cofactor.

The protein localises to the mitochondrion. It catalyses the reaction phosphoethanolamine + H2O = acetaldehyde + NH4(+) + phosphate. In terms of biological role, catalyzes the pyridoxal-phosphate-dependent breakdown of phosphoethanolamine, converting it to ammonia, inorganic phosphate and acetaldehyde. This chain is Ethanolamine-phosphate phospho-lyase (etnppl), found in Danio rerio (Zebrafish).